A 261-amino-acid chain; its full sequence is Carnitinyl-CoA dehydratase (261 aa).

The Nucleophile role is filled by Glu111. Catalysis depends on Glu131, which acts as the Proton acceptor.

This sequence belongs to the enoyl-CoA hydratase/isomerase family.

The enzyme catalyses (R)-carnitinyl-CoA = crotonobetainyl-CoA + H2O. The protein operates within amine and polyamine metabolism; carnitine metabolism. In terms of biological role, catalyzes the reversible dehydration of L-carnitinyl-CoA to crotonobetainyl-CoA. The chain is Carnitinyl-CoA dehydratase from Salmonella dublin (strain CT_02021853).